Reading from the N-terminus, the 171-residue chain is N5-carboxyaminoimidazole ribonucleotide mutase (171 aa).

Residues S13, D16, and R43 each coordinate substrate.

The protein belongs to the AIR carboxylase family. Class I subfamily.

The enzyme catalyses 5-carboxyamino-1-(5-phospho-D-ribosyl)imidazole + H(+) = 5-amino-1-(5-phospho-D-ribosyl)imidazole-4-carboxylate. The protein operates within purine metabolism; IMP biosynthesis via de novo pathway; 5-amino-1-(5-phospho-D-ribosyl)imidazole-4-carboxylate from 5-amino-1-(5-phospho-D-ribosyl)imidazole (N5-CAIR route): step 2/2. In terms of biological role, catalyzes the conversion of N5-carboxyaminoimidazole ribonucleotide (N5-CAIR) to 4-carboxy-5-aminoimidazole ribonucleotide (CAIR). The polypeptide is N5-carboxyaminoimidazole ribonucleotide mutase (Mycobacterium leprae (strain TN)).